The following is a 695-amino-acid chain: Probable serine/threonine-protein kinase abkD (695 aa).

A compositionally biased stretch (polar residues) spans 105–119 (TTKPQPCQAKPPSSK). Residues 105 to 149 (TTKPQPCQAKPPSSKQQQQQQQQQQQQQQQQQQQQSKKKTSKDRL) form a disordered region. A coiled-coil region spans residues 118-150 (SKQQQQQQQQQQQQQQQQQQQQSKKKTSKDRLR). Positions 120 to 139 (QQQQQQQQQQQQQQQQQQQQ) are enriched in low complexity. A helical membrane pass occupies residues 177 to 193 (TIASILAAIALIIYSYE). The Protein kinase domain occupies 317–695 (DFDRLPIAAA…LIKDQMKKLG (379 aa)). Residues 323-331 (IAAASLAQV) and Lys345 each bind ATP. The active-site Proton acceptor is Asp477.

This sequence belongs to the protein kinase superfamily. ADCK protein kinase family.

The protein resides in the membrane. The sequence is that of Probable serine/threonine-protein kinase abkD (abkD) from Dictyostelium discoideum (Social amoeba).